Here is a 304-residue protein sequence, read N- to C-terminus: MGGFVKTQKTNAYYKRFQVKFKRRRQGKTDYRARIRLTNQDKNKYNTPKYRFVVRFTNKDITAQIVYATIAGDIVMAAAYSHELPRYGLEVGLTNYAAAYCTGLLLARRVLKLRGLDQEYEGNIEATGEDYYVEPADERRPFRALLDVGLIRTTTGNRVFGALKGALDGGLDIPHSDKRFAGFKKDEKQLDSDIHRKYIYGGHVADYMRSMAEEEPEKFQAHFSEYLKKGIDADGMEALYKKVHAAIRADPTMAKSTKKEPATHKRYNLKKLTYEQRKASLVERLNALNSSAGADDDDEEEDDE.

The disordered stretch occupies residues 285–304; sequence LNALNSSAGADDDDEEEDDE. The segment covering 294–304 has biased composition (acidic residues); that stretch reads ADDDDEEEDDE.

This sequence belongs to the universal ribosomal protein uL18 family. Component of the large ribosomal subunit (LSU).

Its subcellular location is the cytoplasm. It is found in the nucleus. Its function is as follows. Component of the ribosome, a large ribonucleoprotein complex responsible for the synthesis of proteins in the cell. The small ribosomal subunit (SSU) binds messenger RNAs (mRNAs) and translates the encoded message by selecting cognate aminoacyl-transfer RNA (tRNA) molecules. The large subunit (LSU) contains the ribosomal catalytic site termed the peptidyl transferase center (PTC), which catalyzes the formation of peptide bonds, thereby polymerizing the amino acids delivered by tRNAs into a polypeptide chain. The nascent polypeptides leave the ribosome through a tunnel in the LSU and interact with protein factors that function in enzymatic processing, targeting, and the membrane insertion of nascent chains at the exit of the ribosomal tunnel. The polypeptide is Large ribosomal subunit protein uL18 (RPL5A) (Oryza sativa subsp. indica (Rice)).